Reading from the N-terminus, the 507-residue chain is Capsid vertex component 1 (507 aa).

Residues 219 to 257 (AAAETSVSKHHPALENPSNIRGSAGGEGGGGRAGTGGTV) form a disordered region. Over residues 241–257 (SAGGEGGGGRAGTGGTV) the composition is skewed to gly residues.

The protein belongs to the herpesviridae CVC1 protein family. Interacts (via C-terminus) with capsid vertex component 2/CVC2.

It localises to the virion. The protein resides in the host nucleus. Its function is as follows. Capsid vertex-specific component that plays a role during viral DNA encapsidation, assuring correct genome cleavage and presumably stabilizing capsids that contain full-length viral genomes. In Epstein-Barr virus (strain B95-8) (HHV-4), this protein is Capsid vertex component 1.